Reading from the N-terminus, the 217-residue chain is Glyoxalase ElbB (217 aa).

The active-site Nucleophile is Cys-135.

The protein belongs to the peptidase C56 family. In terms of assembly, homodimer.

It catalyses the reaction glyoxal + H2O = glycolate + H(+). Displays glyoxalase activity, catalyzing the conversion of glyoxal to glycolate. However, this apparent glyoxalase activity may reflect a protein deglycase activity, which could be the primary function of this protein like other DJ-1 superfamily members such as PARK7, YajL, YhbO and HchA. Is not able to use methylglyoxal as substrate. This is Glyoxalase ElbB from Escherichia coli (strain K12).